A 42-amino-acid polypeptide reads, in one-letter code: Photosystem I reaction center subunit IX (42 aa).

The chain crosses the membrane as a helical span at residues 7 to 27 (FLSSAPVLIMALLTFTAGILI).

Belongs to the PsaJ family.

It localises to the cellular thylakoid membrane. May help in the organization of the PsaE and PsaF subunits. The chain is Photosystem I reaction center subunit IX from Microcystis aeruginosa (strain NIES-843 / IAM M-2473).